The chain runs to 439 residues: Dihydroorotate dehydrogenase (quinone), mitochondrial (439 aa).

Residues 1 to 22 constitute a mitochondrion transit peptide; sequence MMHRVGFNVIGRRSFFTVNARR. A helical membrane pass occupies residues 37–53; it reads LTALLLAGSAGYLYFMN. FMN-binding positions include 119–123 and Ser143; that span reads AGLDK. Position 123 (Lys123) interacts with substrate. 168–172 serves as a coordination point for substrate; it reads NRYGF. FMN is bound by residues Asn215 and Asn245. 245-250 provides a ligand contact to substrate; sequence NVSSPN. Ser248 acts as the Nucleophile in catalysis. Residues Lys296 and Ser324 each contribute to the FMN site. 325–326 serves as a coordination point for substrate; the sequence is NT. Residues Gly350, Gly380, and 401–402 each bind FMN; that span reads YT.

It belongs to the dihydroorotate dehydrogenase family. Type 2 subfamily. It depends on FMN as a cofactor.

The protein localises to the mitochondrion inner membrane. The catalysed reaction is (S)-dihydroorotate + a quinone = orotate + a quinol. It functions in the pathway pyrimidine metabolism; UMP biosynthesis via de novo pathway; orotate from (S)-dihydroorotate (quinone route): step 1/1. Catalyzes the conversion of dihydroorotate to orotate with quinone as electron acceptor. The sequence is that of Dihydroorotate dehydrogenase (quinone), mitochondrial (URA9) from Candida glabrata (strain ATCC 2001 / BCRC 20586 / JCM 3761 / NBRC 0622 / NRRL Y-65 / CBS 138) (Yeast).